Reading from the N-terminus, the 879-residue chain is Beta-mannosidase (879 aa).

Positions 1–19 are cleaved as a signal peptide; sequence MHLHLLLILALFRAGCVVA. Asn35, Asn77, Asn89, and Asn113 each carry an N-linked (GlcNAc...) asparagine glycan. A disulfide bond links Cys167 and Cys176. Residue 190–192 coordinates substrate; that stretch reads WDW. Asn226, Asn297, and Asn302 each carry an N-linked (GlcNAc...) asparagine glycan. Asn456 provides a ligand contact to substrate. The active-site Proton donor is the Glu457. 3 cysteine pairs are disulfide-bonded: Cys540–Cys629, Cys732–Cys761, and Cys764–Cys769. Residue Glu554 is the Nucleophile of the active site. An N-linked (GlcNAc...) asparagine glycan is attached at Asn736. N-linked (GlcNAc...) asparagine glycosylation is found at Asn803 and Asn807.

This sequence belongs to the glycosyl hydrolase 2 family. As to quaternary structure, monomer. As to expression, highest level in liver, high levels in lung, testis, skin and spleen, moderate level in thymus. Activity found in plasma, kidney, liver, spleen, pancreas, brain, testis, epididymis, heart, lung and skeletal muscle.

It is found in the lysosome. The catalysed reaction is Hydrolysis of terminal, non-reducing beta-D-mannose residues in beta-D-mannosides.. Its pathway is glycan metabolism; N-glycan degradation. Its function is as follows. Exoglycosidase that cleaves the single beta-linked mannose residue from the non-reducing end of all N-linked glycoprotein oligosaccharides. This chain is Beta-mannosidase, found in Mus musculus (Mouse).